The primary structure comprises 994 residues: E3 ubiquitin-protein ligase Arkadia (994 aa).

Glycyl lysine isopeptide (Lys-Gly) (interchain with G-Cter in SUMO2) cross-links involve residues Lys19, Lys28, Lys34, Lys47, Lys59, Lys73, Lys87, Lys96, and Lys110. Over residues 66–89 the composition is skewed to basic and acidic residues; that stretch reads HLCDDSQKQEKEMNGNQQEQEKSL. The segment at 66–106 is disordered; it reads HLCDDSQKQEKEMNGNQQEQEKSLVVRKKRKSQQAGPSYVQ. The disordered stretch occupies residues 120-191; sequence QHLGTPSDED…HKWPRTETES (72 aa). A compositionally biased stretch (low complexity) spans 132 to 151; it reads SSFSDCLSSPSSSLHFGDSD. Residues 164-173 show a composition bias toward polar residues; it reads RHSQTILNAK. Lys173 is covalently cross-linked (Glycyl lysine isopeptide (Lys-Gly) (interchain with G-Cter in SUMO2)). Residues 174 to 184 show a composition bias toward basic residues; that stretch reads SRSHSARSHKW. Glycyl lysine isopeptide (Lys-Gly) (interchain with G-Cter in SUMO2) cross-links involve residues Lys198 and Lys218. The segment at 212–277 is disordered; it reads CRKRFVKNNS…SSSTEGEEDL (66 aa). Positions 234 to 247 are enriched in basic residues; it reads MQRKKREVLARRKY. The interval 241-404 is interaction with AXIN1; it reads VLARRKYALL…VPTTSARMES (164 aa). The span at 252 to 271 shows a compositional bias: low complexity; it reads SSSSSSENDLSSESSSSSST. Residues 300-304 carry the SUMO interaction motif 1 (SIM) motif; the sequence is VVVIE. Positions 325–331 match the SUMO interaction motif 2 (SIM) motif; the sequence is EVEIVTV. The segment at 337–371 is disordered; sequence SRSTLGHSRSHWSQGSSSHASRPQEPRNRSRISTV. Residues 347–357 show a composition bias toward low complexity; that stretch reads HWSQGSSSHAS. The short motif at 382 to 386 is the SUMO interaction motif 3 (SIM) element; that stretch reads VVDLT. 4 disordered regions span residues 388–476, 508–537, 610–684, and 696–742; these read DEDE…AMPR, HGHH…DPAC, APSQ…VDYV, and ISSH…APPA. Positions 395–467 are enriched in polar residues; sequence VPTTSARMES…SRRTTSSAVT (73 aa). The span at 508–522 shows a compositional bias: basic residues; sequence HGHHFQHHHHHHHTP. Positions 670–680 are enriched in pro residues; it reads NPPPQTQPPPQ. Positions 907–909 are ubiquitin binding; that stretch reads YPH. Glycyl lysine isopeptide (Lys-Gly) (interchain with G-Cter in SUMO2) cross-links involve residues Lys923 and Lys927. Zn(2+) is bound by residues Cys942 and Cys945. The RING-type; atypical zinc finger occupies 942 to 983; that stretch reads CTICLSILEEGEDVRRLPCMHLFHQVCVDQWLITNKKCPICR. The segment at 957-961 is ubiquitin binding; that stretch reads RLPCM. Residues His965 and Cys968 each coordinate Zn(2+).

The protein belongs to the Arkadia family. Monomer. Interacts with SMAD6, SMAD7, AXIN1, AXIN2 and SKIL isoform SNON. Interacts with (phosphorylated) SMAD2 and SMAD3. Part of a complex containing RNF111, AXIN1 and SMAD7. Interacts (via SIM domains) with SUMO1 and SUMO2. Broadly expressed.

The protein localises to the nucleus. It localises to the cytoplasm. It is found in the PML body. It carries out the reaction S-ubiquitinyl-[E2 ubiquitin-conjugating enzyme]-L-cysteine + [acceptor protein]-L-lysine = [E2 ubiquitin-conjugating enzyme]-L-cysteine + N(6)-ubiquitinyl-[acceptor protein]-L-lysine.. Its pathway is protein modification; protein ubiquitination. With respect to regulation, binds free ubiquitin non-covalently via its RING-type zinc finger. Ubiquitin-binding leads to enhance the E3 ubiquitin-protein ligase activity by stabilizing the ubiquitin-conjugating enzyme E2 (donor ubiquitin) in the 'closed' conformation and activating ubiquitin transfer. Its function is as follows. E3 ubiquitin-protein ligase. Required for mesoderm patterning during embryonic development. Acts as an enhancer of the transcriptional responses of the SMAD2/SMAD3 effectors, which are activated downstream of BMP. Acts by mediating ubiquitination and degradation of SMAD inhibitors such as SMAD7, inducing their proteasomal degradation and thereby enhancing the transcriptional activity of TGF-beta and BMP. In addition to enhance transcription of SMAD2/SMAD3 effectors, also regulates their turnover by mediating their ubiquitination and subsequent degradation, coupling their activation with degradation, thereby ensuring that only effectors 'in use' are degraded. Activates SMAD3/SMAD4-dependent transcription by triggering signal-induced degradation of SNON isoform of SKIL. Associates with UBE2D2 as an E2 enzyme. Specifically binds polysumoylated chains via SUMO interaction motifs (SIMs) and mediates ubiquitination of sumoylated substrates. Catalyzes 'Lys-63'-linked ubiquitination of sumoylated XPC in response to UV irradiation, promoting nucleotide excision repair. Mediates ubiquitination and degradation of sumoylated PML. The regulation of the BMP-SMAD signaling is however independent of sumoylation and is not dependent of SUMO interaction motifs (SIMs). This Homo sapiens (Human) protein is E3 ubiquitin-protein ligase Arkadia.